The primary structure comprises 602 residues: MNHFPKLLSSQIGFDVAETLLAGFDRHYCIFREAAIRAKNLFEAADWHGLQKLARERITSYDERVRECIAKLEDEYDAENIDDDVWQQIKLHYIGLLTTHRQPECAETFFNSVCCHILHRSYFNNDFIFVRPAISTEYIENDEPAAKPTYRAYYPGKDGLAVTLERIVTNFQLNPPFENLTRDVQCVIQALRDNFGTFNEAPNFQIHVLSSLFFRNKAAYIIGRIINGDMMLPFALPVHHVKPGLLALDALLCKRDQLLIIFSFAHSYFLVDMEVPSAYVEFLGSILHGKPKAEIYTSVGLQKQGKNLFYRDLLRHLKHSSDRFIIAPGIKGMVMLVFTLPSFPYVFKLIKDAFPPPKETTREQVVGKYQLVKRHDRLGRMADTLEYSSVALPLSRLDDALIRELEKEAPSMLEYEGDNLVIRHVYIERRMVPLNIFLQNGTDADIEHGIREYGNAVKELMQANIFPGDMLYKNFGVTRHGRVVFYDYDEIEYLTDCNVRAVPPPRNEEDEMSGEPWYSVGPHDIFPETYNTFLLGDPRVRESFLKHHADFFDPALWQKQKDYILRGELPDFYPYDRSLRFSIRYPERFAADHVTAATERAA.

ATP-binding positions include 327–333 and Lys348; that span reads APGIKGM. Asp383 is a catalytic residue.

The protein belongs to the AceK family.

It is found in the cytoplasm. The enzyme catalyses L-seryl-[isocitrate dehydrogenase] + ATP = O-phospho-L-seryl-[isocitrate dehydrogenase] + ADP + H(+). Its function is as follows. Bifunctional enzyme which can phosphorylate or dephosphorylate isocitrate dehydrogenase (IDH) on a specific serine residue. This is a regulatory mechanism which enables bacteria to bypass the Krebs cycle via the glyoxylate shunt in response to the source of carbon. When bacteria are grown on glucose, IDH is fully active and unphosphorylated, but when grown on acetate or ethanol, the activity of IDH declines drastically concomitant with its phosphorylation. This Paraburkholderia phymatum (strain DSM 17167 / CIP 108236 / LMG 21445 / STM815) (Burkholderia phymatum) protein is Isocitrate dehydrogenase kinase/phosphatase.